The chain runs to 174 residues: Ribosome maturation factor RimM (174 aa).

One can recognise a PRC barrel domain in the interval 97 to 173; sequence GNKFYFHEVI…DLPVGLVEMY (77 aa).

The protein belongs to the RimM family. In terms of assembly, binds ribosomal protein uS19.

The protein localises to the cytoplasm. Its function is as follows. An accessory protein needed during the final step in the assembly of 30S ribosomal subunit, possibly for assembly of the head region. Essential for efficient processing of 16S rRNA. May be needed both before and after RbfA during the maturation of 16S rRNA. It has affinity for free ribosomal 30S subunits but not for 70S ribosomes. This is Ribosome maturation factor RimM from Flavobacterium johnsoniae (strain ATCC 17061 / DSM 2064 / JCM 8514 / BCRC 14874 / CCUG 350202 / NBRC 14942 / NCIMB 11054 / UW101) (Cytophaga johnsonae).